Consider the following 136-residue polypeptide: ATP synthase F(0) complex subunit C1, mitochondrial (136 aa).

A mitochondrion-targeting transit peptide spans 1–61; sequence MQTTGALLIS…REFQTSVVSR (61 aa). Residues 77–97 form a helical membrane-spanning segment; that stretch reads VGVAGSGAGIGTVFGSLIIGY. Lysine 104 carries the N6,N6,N6-trimethyllysine modification. The helical transmembrane segment at 112-132 threads the bilayer; sequence ILGFALSEAMGLFCLMVAFLI.

This sequence belongs to the ATPase C chain family. As to quaternary structure, homooctamer; the c-ring consists of eight c subunits forming a circle, and each subunit adopts a hairpin shape. Component of the ATP synthase complex composed at least of ATP5F1A/subunit alpha, ATP5F1B/subunit beta, ATP5MC1/subunit c (homooctomer), MT-ATP6/subunit a, MT-ATP8/subunit 8, ATP5ME/subunit e, ATP5MF/subunit f, ATP5MG/subunit g, ATP5MK/subunit k, ATP5MJ/subunit j, ATP5F1C/subunit gamma, ATP5F1D/subunit delta, ATP5F1E/subunit epsilon, ATP5PF/subunit F6, ATP5PB/subunit b, ATP5PD/subunit d, ATP5PO/subunit OSCP. ATP synthase complex consists of a soluble F(1) head domain (subunits alpha(3) and beta(3)) - the catalytic core - and a membrane F(0) domain - the membrane proton channel (subunits c, a, 8, e, f, g, k and j). These two domains are linked by a central stalk (subunits gamma, delta, and epsilon) rotating inside the F1 region and a stationary peripheral stalk (subunits F6, b, d, and OSCP). Interacts with TMEM70 (homooligomer form); this interaction facilitates the oligomer formation of subunit c/ATP5MC1 (c-ring) and the c-ring membrane insertion and also protects ATP5MC1 against intramitochondrial proteolysis. Post-translationally, trimethylated by ATPSCKMT at Lys-104. Methylation is required for proper incorporation of the C subunit into the ATP synthase complex and mitochondrial respiration.

It is found in the mitochondrion membrane. The catalysed reaction is H(+)(in) = H(+)(out). Subunit c, of the mitochondrial membrane ATP synthase complex (F(1)F(0) ATP synthase or Complex V) that produces ATP from ADP in the presence of a proton gradient across the membrane which is generated by electron transport complexes of the respiratory chain. ATP synthase complex consist of a soluble F(1) head domain - the catalytic core - and a membrane F(1) domain - the membrane proton channel. These two domains are linked by a central stalk rotating inside the F(1) region and a stationary peripheral stalk. During catalysis, ATP synthesis in the catalytic domain of F(1) is coupled via a rotary mechanism of the central stalk subunits to proton translocation. With the subunit a (MT-ATP6), forms the proton-conducting channel in the F(0) domain, that contains two crucial half-channels (inlet and outlet) that facilitate proton movement from the mitochondrial intermembrane space (IMS) into the matrix. Protons are taken up via the inlet half-channel and released through the outlet half-channel, following a Grotthuss mechanism. This is ATP synthase F(0) complex subunit C1, mitochondrial from Ovis aries (Sheep).